The following is a 229-amino-acid chain: Large ribosomal subunit protein bL19cy (229 aa).

The N-terminal 70 residues, 1–70, are a transit peptide targeting the chloroplast; sequence MATSSHLLPQ…DSKKRKEFIA (70 aa).

The protein belongs to the bacterial ribosomal protein bL19 family. Part of the 50S ribosomal subunit.

It localises to the plastid. The protein resides in the chloroplast. Functionally, located at the 30S-50S ribosomal subunit interface and binds directly to 23S ribosomal RNA. The chain is Large ribosomal subunit protein bL19cy from Arabidopsis thaliana (Mouse-ear cress).